We begin with the raw amino-acid sequence, 398 residues long: Cathepsin E (398 aa).

The first 21 residues, 1-21, serve as a signal peptide directing secretion; it reads MKPLFVLLLLLLLLDLAQAQG. Positions 22-58 are cleaved as a propeptide — activation peptide; that stretch reads VLHRVPLRRHQSLRKKLRAQGQLSDFWRSHNLDMIEF. The region spanning 80–394 is the Peptidase A1 domain; sequence YFGTVSIGSP…DRGNNQVGLA (315 aa). The N-linked (GlcNAc...) asparagine glycan is linked to N92. Residue D98 is part of the active site. 2 disulfide bridges follow: C111–C116 and C274–C278. The active site involves D283.

The protein belongs to the peptidase A1 family. As to quaternary structure, homodimer; disulfide-linked. Glycosylated. The nature of the carbohydrate chain varies between cell types. In brain microglia, the proenzyme contains a high mannose-type oligosaccharide, while the mature enzyme contains a complex-type oligosaccharide. In stomach and spleen, the mature enzyme contains a high mannose-type oligosaccharide. In erythrocyte membranes, the mature enzyme contains a complex-type oligosaccharide. In terms of tissue distribution, expressed abundantly in lymphocytes and macrophages of the thymus and spleen, and in the M cells of the intestine. In the brain, expression is limited to reactive microglial cells, the large pyrimidial neurons in the cerebral cortex, the CA1 and CA3 pyrimidial neurons of the hippocampus, the large neurons of the neostriatum, and the Purkinje neurons of the cerebellum.

The protein localises to the endosome. The enzyme catalyses Similar to cathepsin D, but slightly broader specificity.. In terms of biological role, may have a role in immune function. Probably involved in the processing of antigenic peptides during MHC class II-mediated antigen presentation. May play a role in activation-induced lymphocyte depletion in the thymus, and in neuronal degeneration and glial cell activation in the brain. This chain is Cathepsin E (Ctse), found in Rattus norvegicus (Rat).